A 395-amino-acid polypeptide reads, in one-letter code: 1-deoxy-D-xylulose 5-phosphate reductoisomerase (395 aa).

Positions 10, 11, 12, 13, 36, and 123 each coordinate NADPH. Lys124 is a 1-deoxy-D-xylulose 5-phosphate binding site. Glu125 provides a ligand contact to NADPH. Asp149 is a Mn(2+) binding site. Residues Ser150, Glu151, Ser185, and His208 each coordinate 1-deoxy-D-xylulose 5-phosphate. Position 151 (Glu151) interacts with Mn(2+). Gly214 serves as a coordination point for NADPH. Residues Ser221, Asn226, Lys227, and Glu230 each coordinate 1-deoxy-D-xylulose 5-phosphate. Mn(2+) is bound at residue Glu230.

It belongs to the DXR family. Mg(2+) serves as cofactor. It depends on Mn(2+) as a cofactor.

It catalyses the reaction 2-C-methyl-D-erythritol 4-phosphate + NADP(+) = 1-deoxy-D-xylulose 5-phosphate + NADPH + H(+). It functions in the pathway isoprenoid biosynthesis; isopentenyl diphosphate biosynthesis via DXP pathway; isopentenyl diphosphate from 1-deoxy-D-xylulose 5-phosphate: step 1/6. Functionally, catalyzes the NADPH-dependent rearrangement and reduction of 1-deoxy-D-xylulose-5-phosphate (DXP) to 2-C-methyl-D-erythritol 4-phosphate (MEP). The protein is 1-deoxy-D-xylulose 5-phosphate reductoisomerase of Shewanella amazonensis (strain ATCC BAA-1098 / SB2B).